Reading from the N-terminus, the 432-residue chain is MLLSKYFLPVLKEDPSEAQITSHKLMLRSGMIRQQAAGIYSWLPLGLKVLKNIENIVRSNMDKAGCLEVLMPCIQPAHLWVESGRFDNYGKEMLKFQDRHDNTLLFGPTNEDMVTDIFRNNIKSYKDLPKNLYHIQWKFRDEIRPRFGVMRGREFLMKDAYSFDIDEESAVKTYNQMYKAYINTFRDLGVFAVPVIADNGPIGGKLSHEFHIIAETGESNIYYDKRFKTLKDNPDIDIEEIKSWYAAAEEKHDASKLSSDKEITSSKGIEVGHIFYIGTKYSVNMNALINDEHGKLTPIEMSSYGIGISRLVAAIIEANSDAKGIIWPIAVAPFKISLINLNIHDSKCLELAERVYNELLAQNIEVLYDDTDVRAGSKFATHDLIGSPYQIIIGPKKAANNIVELKNRKNGEIEDIDLNKRALNSYLTFFNS.

The protein belongs to the class-II aminoacyl-tRNA synthetase family. ProS type 2 subfamily. In terms of assembly, homodimer.

It is found in the cytoplasm. The enzyme catalyses tRNA(Pro) + L-proline + ATP = L-prolyl-tRNA(Pro) + AMP + diphosphate. Catalyzes the attachment of proline to tRNA(Pro) in a two-step reaction: proline is first activated by ATP to form Pro-AMP and then transferred to the acceptor end of tRNA(Pro). The chain is Proline--tRNA ligase from Rickettsia bellii (strain OSU 85-389).